Reading from the N-terminus, the 260-residue chain is Small ribosomal subunit protein uS2 (260 aa).

It belongs to the universal ribosomal protein uS2 family.

The chain is Small ribosomal subunit protein uS2 from Gluconacetobacter diazotrophicus (strain ATCC 49037 / DSM 5601 / CCUG 37298 / CIP 103539 / LMG 7603 / PAl5).